The following is a 147-amino-acid chain: Small ribosomal subunit protein uS5 (147 aa).

Residues 9 to 72 form the S5 DRBM domain; that stretch reads FEEVIVDIGR…DDAFKNIIHV (64 aa).

The protein belongs to the universal ribosomal protein uS5 family. As to quaternary structure, part of the 30S ribosomal subunit. Contacts proteins S4 and S8.

In terms of biological role, with S4 and S12 plays an important role in translational accuracy. Functionally, located at the back of the 30S subunit body where it stabilizes the conformation of the head with respect to the body. This Campylobacter concisus (strain 13826) protein is Small ribosomal subunit protein uS5.